The sequence spans 416 residues: Transcription factor LATE FLOWERING (416 aa).

2 stretches are compositionally biased toward low complexity: residues 176–186 (STTTTTTALPP) and 200–212 (TSPT…TSET). 2 disordered regions span residues 176-226 (STTT…AGGS) and 276-311 (LGGP…QTVA). Residues 303–316 (ISSDPQTVAARLRR) are basic motif; degenerate. In terms of domain architecture, bHLH spans 303-352 (ISSDPQTVAARLRRERVSERLRVLQRLVPGGSKMDTATMLDEAASYLKFL). The tract at residues 317–352 (ERVSERLRVLQRLVPGGSKMDTATMLDEAASYLKFL) is helix-loop-helix motif.

It belongs to the bHLH protein family. In terms of assembly, interacts with PIL13 and PIL15.

The protein resides in the nucleus. In terms of biological role, transcription factor involved in the negative regulation of flowering. May be involved in the repression of the flowering factor GI and HD1 by interacting with PIL13 and PIL15 and competing with PRR1. Possesses transactivation activity in yeast. The protein is Transcription factor LATE FLOWERING of Oryza sativa subsp. japonica (Rice).